A 91-amino-acid chain; its full sequence is Non-specific lipid-transfer protein 1 (91 aa).

Intrachain disulfides connect cysteine 3-cysteine 50, cysteine 13-cysteine 27, cysteine 28-cysteine 73, and cysteine 48-cysteine 87.

It belongs to the plant LTP family.

Functionally, plant non-specific lipid-transfer proteins transfer phospholipids as well as galactolipids across membranes. May play a role in wax or cutin deposition in the cell walls of expanding epidermal cells and certain secretory tissues. The chain is Non-specific lipid-transfer protein 1 from Prunus persica (Peach).